The sequence spans 224 residues: Phosphoribosylformylglycinamidine synthase subunit PurQ (224 aa).

The Glutamine amidotransferase type-1 domain occupies 2 to 224; that stretch reads KIAVIVFPGS…SLLEEGKVKG (223 aa). Cysteine 86 (nucleophile) is an active-site residue. Active-site residues include histidine 195 and glutamate 197.

In terms of assembly, part of the FGAM synthase complex composed of 1 PurL, 1 PurQ and 2 PurS subunits.

The protein localises to the cytoplasm. The catalysed reaction is N(2)-formyl-N(1)-(5-phospho-beta-D-ribosyl)glycinamide + L-glutamine + ATP + H2O = 2-formamido-N(1)-(5-O-phospho-beta-D-ribosyl)acetamidine + L-glutamate + ADP + phosphate + H(+). It catalyses the reaction L-glutamine + H2O = L-glutamate + NH4(+). Its pathway is purine metabolism; IMP biosynthesis via de novo pathway; 5-amino-1-(5-phospho-D-ribosyl)imidazole from N(2)-formyl-N(1)-(5-phospho-D-ribosyl)glycinamide: step 1/2. Its function is as follows. Part of the phosphoribosylformylglycinamidine synthase complex involved in the purines biosynthetic pathway. Catalyzes the ATP-dependent conversion of formylglycinamide ribonucleotide (FGAR) and glutamine to yield formylglycinamidine ribonucleotide (FGAM) and glutamate. The FGAM synthase complex is composed of three subunits. PurQ produces an ammonia molecule by converting glutamine to glutamate. PurL transfers the ammonia molecule to FGAR to form FGAM in an ATP-dependent manner. PurS interacts with PurQ and PurL and is thought to assist in the transfer of the ammonia molecule from PurQ to PurL. This Ligilactobacillus salivarius (strain UCC118) (Lactobacillus salivarius) protein is Phosphoribosylformylglycinamidine synthase subunit PurQ.